A 117-amino-acid chain; its full sequence is 3',5'-cyclic-AMP phosphodiesterase 4A (117 aa).

Residues 42–79 are disordered; sequence KQNEVEIPSPTMKDREPQEAPRQRPCQQLPPPVPHLQP. A compositionally biased stretch (basic and acidic residues) spans 53–63; it reads MKDREPQEAPR. The tract at residues 78-117 is catalytic; that stretch reads QPMSQITGVKRLSHNSGLNNASIPRFGVKTDQEELLAQEL.

Belongs to the cyclic nucleotide phosphodiesterase family. PDE4 subfamily. Interacts with LYN (via SH3 domain). Interacts with ARRB2. Zn(2+) is required as a cofactor. Requires Mg(2+) as cofactor. The cofactor is Mn(2+). Proteolytically cleaved by CASP3.

The protein localises to the cytoplasm. It is found in the cytosol. The protein resides in the membrane. The enzyme catalyses 3',5'-cyclic AMP + H2O = AMP + H(+). It functions in the pathway purine metabolism; 3',5'-cyclic AMP degradation; AMP from 3',5'-cyclic AMP: step 1/1. Hydrolyzes the second messenger 3',5'-cyclic AMP (cAMP), which is a key regulator of many important physiological processes. This Cavia porcellus (Guinea pig) protein is 3',5'-cyclic-AMP phosphodiesterase 4A (PDE4A).